Consider the following 192-residue polypeptide: UPF0312 protein YE1254 (192 aa).

A signal peptide spans 1-23; it reads MFNKTLLGLTVGALMFTAGSAVA.

Belongs to the UPF0312 family. Type 1 subfamily.

Its subcellular location is the periplasm. This Yersinia enterocolitica serotype O:8 / biotype 1B (strain NCTC 13174 / 8081) protein is UPF0312 protein YE1254.